The primary structure comprises 460 residues: GTPase Der (460 aa).

EngA-type G domains lie at 2 to 164 (QSII…HEEF) and 196 to 368 (IRVG…ENFT). GTP contacts are provided by residues 8 to 15 (GKPNVGKS), 55 to 59 (DSGGL), 116 to 119 (NKVD), 202 to 209 (GRVNVGKS), 249 to 253 (DTAGI), and 313 to 316 (NKWD). One can recognise a KH-like domain in the interval 369–453 (QKIQTSKLNT…PLVIASRKKG (85 aa)).

This sequence belongs to the TRAFAC class TrmE-Era-EngA-EngB-Septin-like GTPase superfamily. EngA (Der) GTPase family. As to quaternary structure, associates with the 50S ribosomal subunit.

Functionally, GTPase that plays an essential role in the late steps of ribosome biogenesis. The polypeptide is GTPase Der (Campylobacter jejuni subsp. jejuni serotype O:6 (strain 81116 / NCTC 11828)).